The primary structure comprises 307 residues: Putative serine/threonine-protein phosphatase C22H10.04 (307 aa).

Asp51, His53, Asp79, and Asn111 together coordinate Mn(2+). Residue His112 is the Proton donor of the active site. Positions 161 and 236 each coordinate Mn(2+).

It belongs to the PPP phosphatase family. PP-X subfamily. Requires Mn(2+) as cofactor.

The enzyme catalyses O-phospho-L-seryl-[protein] + H2O = L-seryl-[protein] + phosphate. It catalyses the reaction O-phospho-L-threonyl-[protein] + H2O = L-threonyl-[protein] + phosphate. This chain is Putative serine/threonine-protein phosphatase C22H10.04, found in Schizosaccharomyces pombe (strain 972 / ATCC 24843) (Fission yeast).